The sequence spans 374 residues: MPGAVEGPRWKQAEDIRDIYDFRDVLGTGAFSEVILAEDKRTQKLVAIKCIAKKALEGKEGSMENEIAVLHKIKHPNIVALDDIYESGGHLYLIMQLVSGGELFDRIVEKGFYTERDASRLIFQVLDAVKYLHDLGIVHRDLKPENLLYYSLDEDSKIMISDFGLSKMEDPGSVLSTACGTPGYVAPEVLAQKPYSKAVDCWSIGVIAYILLCGYPPFYDENDAKLFEQILKAEYEFDSPYWDDISDSAKDFIRHLMEKDPEKRFTCEQALQHPWIAGDTALDKNIHQSVSEQIKKNFAKSKWKQAFNATAVVRHMRKLQLGTSQEGQGQTGSHGELLTPTAGGPAAGCCCRDCCVEPGSELPPAPPPSSRAMD.

The Protein kinase domain occupies 20–276; that stretch reads YDFRDVLGTG…CEQALQHPWI (257 aa). ATP is bound by residues 26 to 34 and Lys-49; that span reads LGTGAFSEV. A Glycyl lysine isopeptide (Lys-Gly) (interchain with G-Cter in ubiquitin) cross-link involves residue Lys-59. The Proton acceptor role is filled by Asp-141. Thr-177 is subject to Phosphothreonine; by CaMKK1 and CaMKK2. The autoinhibitory domain stretch occupies residues 276–316; that stretch reads IAGDTALDKNIHQSVSEQIKKNFAKSKWKQAFNATAVVRHM. The tract at residues 296–317 is calmodulin-binding; it reads KNFAKSKWKQAFNATAVVRHMR. The short motif at 315–321 is the Nuclear export signal element; that stretch reads HMRKLQL.

The protein belongs to the protein kinase superfamily. CAMK Ser/Thr protein kinase family. CaMK subfamily. Monomer. Interacts with XPO1. In terms of processing, phosphorylated by CaMKK1 and CaMKK2 on Thr-177. Polybiquitinated by the E3 ubiquitin-protein ligase complex SCF(FBXL12), leading to proteasomal degradation. As to expression, ubiquitous.

The protein resides in the cytoplasm. It is found in the nucleus. It carries out the reaction L-seryl-[protein] + ATP = O-phospho-L-seryl-[protein] + ADP + H(+). The enzyme catalyses L-threonyl-[protein] + ATP = O-phospho-L-threonyl-[protein] + ADP + H(+). With respect to regulation, activated by Ca(2+)/calmodulin. Binding of calmodulin results in conformational change that relieves intrasteric autoinhibition and allows phosphorylation of Thr-177 within the activation loop by CaMKK1 or CaMKK2. Phosphorylation of Thr-177 results in several fold increase in total activity. Unlike CaMK4, is unable to exhibit autonomous activity after Ca(2+)/calmodulin activation. Functionally, calcium/calmodulin-dependent protein kinase that operates in the calcium-triggered CaMKK-CaMK1 signaling cascade and, upon calcium influx, regulates transcription activators activity, cell cycle, hormone production, cell differentiation, actin filament organization and neurite outgrowth. Recognizes the substrate consensus sequence [MVLIF]-x-R-x(2)-[ST]-x(3)-[MVLIF]. Regulates axonal extension and growth cone motility in hippocampal and cerebellar nerve cells. Upon NMDA receptor-mediated Ca(2+) elevation, promotes dendritic growth in hippocampal neurons and is essential in synapses for full long-term potentiation (LTP) and ERK2-dependent translational activation. Downstream of NMDA receptors, promotes the formation of spines and synapses in hippocampal neurons by phosphorylating ARHGEF7/BETAPIX on 'Ser-673', which results in the enhancement of ARHGEF7 activity and activation of RAC1. Promotes neuronal differentiation and neurite outgrowth by activation and phosphorylation of MARK2 on 'Ser-91', 'Ser-92', 'Ser-93' and 'Ser-294'. Promotes nuclear export of HDAC5 and binding to 14-3-3 by phosphorylation of 'Ser-259' and 'Ser-498' in the regulation of muscle cell differentiation. Regulates NUMB-mediated endocytosis by phosphorylation of NUMB on 'Ser-276' and 'Ser-295'. Involved in the regulation of basal and estrogen-stimulated migration of medulloblastoma cells through ARHGEF7/BETAPIX phosphorylation. Is required for proper activation of cyclin-D1/CDK4 complex during G1 progression in diploid fibroblasts. Plays a role in K(+) and ANG2-mediated regulation of the aldosterone synthase (CYP11B2) to produce aldosterone in the adrenal cortex. Phosphorylates EIF4G3/eIF4GII. In vitro phosphorylates CREB1, ATF1, CFTR, MYL9 and SYN1/synapsin I. The polypeptide is Calcium/calmodulin-dependent protein kinase type 1 (Camk1) (Mus musculus (Mouse)).